A 291-amino-acid polypeptide reads, in one-letter code: Ribonuclease Z (291 aa).

Residues His-61, His-63, Asp-65, His-66, His-133, Asp-201, and His-257 each coordinate Zn(2+). Asp-65 acts as the Proton acceptor in catalysis.

It belongs to the RNase Z family. As to quaternary structure, homodimer. Requires Zn(2+) as cofactor.

The enzyme catalyses Endonucleolytic cleavage of RNA, removing extra 3' nucleotides from tRNA precursor, generating 3' termini of tRNAs. A 3'-hydroxy group is left at the tRNA terminus and a 5'-phosphoryl group is left at the trailer molecule.. In terms of biological role, zinc phosphodiesterase, which displays some tRNA 3'-processing endonuclease activity. Probably involved in tRNA maturation, by removing a 3'-trailer from precursor tRNA. The protein is Ribonuclease Z of Saccharolobus islandicus (strain Y.N.15.51 / Yellowstone #2) (Sulfolobus islandicus).